The following is a 581-amino-acid chain: Proline--tRNA ligase (581 aa).

The protein belongs to the class-II aminoacyl-tRNA synthetase family. ProS type 1 subfamily. In terms of assembly, homodimer.

It is found in the cytoplasm. It carries out the reaction tRNA(Pro) + L-proline + ATP = L-prolyl-tRNA(Pro) + AMP + diphosphate. Catalyzes the attachment of proline to tRNA(Pro) in a two-step reaction: proline is first activated by ATP to form Pro-AMP and then transferred to the acceptor end of tRNA(Pro). As ProRS can inadvertently accommodate and process non-cognate amino acids such as alanine and cysteine, to avoid such errors it has two additional distinct editing activities against alanine. One activity is designated as 'pretransfer' editing and involves the tRNA(Pro)-independent hydrolysis of activated Ala-AMP. The other activity is designated 'posttransfer' editing and involves deacylation of mischarged Ala-tRNA(Pro). The misacylated Cys-tRNA(Pro) is not edited by ProRS. The sequence is that of Proline--tRNA ligase from Variovorax paradoxus (strain S110).